The chain runs to 113 residues: Nucleoid-associated protein Cthe_2143 (113 aa).

The protein belongs to the YbaB/EbfC family. In terms of assembly, homodimer.

The protein localises to the cytoplasm. It localises to the nucleoid. In terms of biological role, binds to DNA and alters its conformation. May be involved in regulation of gene expression, nucleoid organization and DNA protection. This is Nucleoid-associated protein Cthe_2143 from Acetivibrio thermocellus (strain ATCC 27405 / DSM 1237 / JCM 9322 / NBRC 103400 / NCIMB 10682 / NRRL B-4536 / VPI 7372) (Clostridium thermocellum).